A 320-amino-acid polypeptide reads, in one-letter code: Lipoyl synthase (320 aa).

7 residues coordinate [4Fe-4S] cluster: Cys67, Cys72, Cys78, Cys93, Cys97, Cys100, and Ser307. A Radical SAM core domain is found at 79–296 (FNHGTATFMI…RDKANEMGFE (218 aa)).

The protein belongs to the radical SAM superfamily. Lipoyl synthase family. [4Fe-4S] cluster serves as cofactor.

The protein localises to the cytoplasm. The enzyme catalyses [[Fe-S] cluster scaffold protein carrying a second [4Fe-4S](2+) cluster] + N(6)-octanoyl-L-lysyl-[protein] + 2 oxidized [2Fe-2S]-[ferredoxin] + 2 S-adenosyl-L-methionine + 4 H(+) = [[Fe-S] cluster scaffold protein] + N(6)-[(R)-dihydrolipoyl]-L-lysyl-[protein] + 4 Fe(3+) + 2 hydrogen sulfide + 2 5'-deoxyadenosine + 2 L-methionine + 2 reduced [2Fe-2S]-[ferredoxin]. It participates in protein modification; protein lipoylation via endogenous pathway; protein N(6)-(lipoyl)lysine from octanoyl-[acyl-carrier-protein]: step 2/2. In terms of biological role, catalyzes the radical-mediated insertion of two sulfur atoms into the C-6 and C-8 positions of the octanoyl moiety bound to the lipoyl domains of lipoate-dependent enzymes, thereby converting the octanoylated domains into lipoylated derivatives. The polypeptide is Lipoyl synthase (Haemophilus influenzae (strain PittGG)).